Here is a 521-residue protein sequence, read N- to C-terminus: Nitric oxide reductase transcription regulator NorR2 (521 aa).

The residue at position 56 (aspartate 56) is a 4-aspartylphosphate. The Sigma-54 factor interaction domain occupies 193-422 (IIGQSEAIAN…LEHVISRAAL (230 aa)). ATP is bound by residues 221–228 (GETGVGKE) and 293–302 (EVGELPLAIQ). A DNA-binding region (H-T-H motif) is located at residues 497–516 (WAQAARQLGIDASNLHKLAR).

Its pathway is nitrogen metabolism; nitrate reduction (denitrification) [regulation]. Functionally, required for the nitric oxide (NO) induced expression of NO reductase. Not required for expression of 2 other pathway members, nitrate reductase (nirS) and nitrous oxide reductase (nosZ). In Cupriavidus necator (strain ATCC 17699 / DSM 428 / KCTC 22496 / NCIMB 10442 / H16 / Stanier 337) (Ralstonia eutropha), this protein is Nitric oxide reductase transcription regulator NorR2 (norR2).